The primary structure comprises 586 residues: DNA-binding protein RFX8 (586 aa).

The segment at residues 22–97 (VIQWLVDNFC…YHYDGICIKK (76 aa)) is a DNA-binding region (RFX-type winged-helix).

Belongs to the RFX family.

It is found in the nucleus. Functionally, may be a transcription factor. In Homo sapiens (Human), this protein is DNA-binding protein RFX8 (RFX8).